We begin with the raw amino-acid sequence, 78 residues long: uncharacterized protein (78 aa).

A signal peptide spans 1–22 (MFKKSVLFATLLSGVMAFSTNA).

The protein belongs to the BhsA/McbA family.

It is found in the periplasm. Probably involved in reactive chlorine species (RCS) stress resistance. This is an uncharacterized protein from Escherichia coli (strain K12).